A 273-amino-acid chain; its full sequence is Dermonecrotic toxin LamSicTox-alphaIC1 (273 aa).

Histidine 5 is an active-site residue. 2 residues coordinate Mg(2+): glutamate 25 and aspartate 27. Histidine 41 (nucleophile) is an active-site residue. Intrachain disulfides connect cysteine 45/cysteine 51 and cysteine 47/cysteine 190. Position 85 (aspartate 85) interacts with Mg(2+).

The protein belongs to the arthropod phospholipase D family. Class II subfamily. Mg(2+) is required as a cofactor. Expressed by the venom gland.

It localises to the secreted. The catalysed reaction is an N-(acyl)-sphingosylphosphocholine = an N-(acyl)-sphingosyl-1,3-cyclic phosphate + choline. It catalyses the reaction an N-(acyl)-sphingosylphosphoethanolamine = an N-(acyl)-sphingosyl-1,3-cyclic phosphate + ethanolamine. The enzyme catalyses a 1-acyl-sn-glycero-3-phosphocholine = a 1-acyl-sn-glycero-2,3-cyclic phosphate + choline. It carries out the reaction a 1-acyl-sn-glycero-3-phosphoethanolamine = a 1-acyl-sn-glycero-2,3-cyclic phosphate + ethanolamine. Dermonecrotic toxins cleave the phosphodiester linkage between the phosphate and headgroup of certain phospholipids (sphingolipid and lysolipid substrates), forming an alcohol (often choline) and a cyclic phosphate. This toxin acts on sphingomyelin (SM). It may also act on ceramide phosphoethanolamine (CPE), lysophosphatidylcholine (LPC) and lysophosphatidylethanolamine (LPE), but not on lysophosphatidylserine (LPS), and lysophosphatidylglycerol (LPG). It acts by transphosphatidylation, releasing exclusively cyclic phosphate products as second products. Induces dermonecrosis, hemolysis, increased vascular permeability, edema, inflammatory response, and platelet aggregation. The sequence is that of Dermonecrotic toxin LamSicTox-alphaIC1 from Loxosceles amazonica (Recluse spider).